Consider the following 525-residue polypeptide: Probable lipid II flippase MurJ (525 aa).

The next 14 helical transmembrane spans lie at 10 to 30 (LLKS…LGLV), 32 to 52 (DVVV…FFAN), 100 to 120 (VLVT…TALF), 140 to 160 (LASL…FVAL), 171 to 191 (FAVS…CAWY), 203 to 223 (LAIG…PFLI), 247 to 267 (MIPA…DSFV), 285 to 305 (LLEF…LPAL), 330 to 350 (FLGI…LMVL), 368 to 388 (LLAY…APGY), 402 to 422 (IIAM…YGYV), 423 to 443 (GLAV…YRGL), 455 to 475 (TVWF…ALLW), and 495 to 515 (LTGL…LLGV).

The protein belongs to the MurJ/MviN family.

It is found in the cell inner membrane. It participates in cell wall biogenesis; peptidoglycan biosynthesis. In terms of biological role, involved in peptidoglycan biosynthesis. Transports lipid-linked peptidoglycan precursors from the inner to the outer leaflet of the cytoplasmic membrane. This chain is Probable lipid II flippase MurJ, found in Vibrio cholerae serotype O1 (strain ATCC 39315 / El Tor Inaba N16961).